A 215-amino-acid polypeptide reads, in one-letter code: Large ribosomal subunit protein bL25 (215 aa).

Over residues 192–203 the composition is skewed to acidic residues; the sequence is EEATEEEEEAAE. The tract at residues 192 to 215 is disordered; the sequence is EEATEEEEEAAEPEVIKRKEEEEE. Residues 205-215 are compositionally biased toward basic and acidic residues; it reads EVIKRKEEEEE.

This sequence belongs to the bacterial ribosomal protein bL25 family. CTC subfamily. Part of the 50S ribosomal subunit; part of the 5S rRNA/L5/L18/L25 subcomplex. Contacts the 5S rRNA. Binds to the 5S rRNA independently of L5 and L18.

This is one of the proteins that binds to the 5S RNA in the ribosome where it forms part of the central protuberance. The protein is Large ribosomal subunit protein bL25 of Thermotoga maritima (strain ATCC 43589 / DSM 3109 / JCM 10099 / NBRC 100826 / MSB8).